The following is a 297-amino-acid chain: Phosphatidylserine decarboxylase proenzyme (297 aa).

Residues Asp100, His157, and Ser263 each act as charge relay system; for autoendoproteolytic cleavage activity in the active site. Ser263 (schiff-base intermediate with substrate; via pyruvic acid; for decarboxylase activity) is an active-site residue. Ser263 bears the Pyruvic acid (Ser); by autocatalysis mark.

This sequence belongs to the phosphatidylserine decarboxylase family. PSD-B subfamily. Prokaryotic type I sub-subfamily. As to quaternary structure, heterodimer of a large membrane-associated beta subunit and a small pyruvoyl-containing alpha subunit. Pyruvate is required as a cofactor. Is synthesized initially as an inactive proenzyme. Formation of the active enzyme involves a self-maturation process in which the active site pyruvoyl group is generated from an internal serine residue via an autocatalytic post-translational modification. Two non-identical subunits are generated from the proenzyme in this reaction, and the pyruvate is formed at the N-terminus of the alpha chain, which is derived from the carboxyl end of the proenzyme. The autoendoproteolytic cleavage occurs by a canonical serine protease mechanism, in which the side chain hydroxyl group of the serine supplies its oxygen atom to form the C-terminus of the beta chain, while the remainder of the serine residue undergoes an oxidative deamination to produce ammonia and the pyruvoyl prosthetic group on the alpha chain. During this reaction, the Ser that is part of the protease active site of the proenzyme becomes the pyruvoyl prosthetic group, which constitutes an essential element of the active site of the mature decarboxylase.

It is found in the cell membrane. The catalysed reaction is a 1,2-diacyl-sn-glycero-3-phospho-L-serine + H(+) = a 1,2-diacyl-sn-glycero-3-phosphoethanolamine + CO2. It functions in the pathway phospholipid metabolism; phosphatidylethanolamine biosynthesis; phosphatidylethanolamine from CDP-diacylglycerol: step 2/2. Its function is as follows. Catalyzes the formation of phosphatidylethanolamine (PtdEtn) from phosphatidylserine (PtdSer). In Actinobacillus pleuropneumoniae serotype 5b (strain L20), this protein is Phosphatidylserine decarboxylase proenzyme.